The primary structure comprises 471 residues: Glutamyl-tRNA(Gln) amidotransferase subunit A, mitochondrial (471 aa).

Active-site charge relay system residues include Lys-64 and Ser-141. Ser-165 functions as the Acyl-ester intermediate in the catalytic mechanism.

The protein belongs to the amidase family. GatA subfamily. In terms of assembly, subunit of the heterotrimeric GatCAB amidotransferase (AdT) complex, composed of A, B and C subunits.

The protein localises to the mitochondrion. The enzyme catalyses L-glutamyl-tRNA(Gln) + L-glutamine + ATP + H2O = L-glutaminyl-tRNA(Gln) + L-glutamate + ADP + phosphate + H(+). Its function is as follows. Allows the formation of correctly charged Gln-tRNA(Gln) through the transamidation of misacylated Glu-tRNA(Gln) in the mitochondria. The reaction takes place in the presence of glutamine and ATP through an activated gamma-phospho-Glu-tRNA(Gln). This Schizosaccharomyces pombe (strain 972 / ATCC 24843) (Fission yeast) protein is Glutamyl-tRNA(Gln) amidotransferase subunit A, mitochondrial.